The chain runs to 285 residues: Hydroxyethylthiazole kinase (285 aa).

Substrate is bound at residue Met43. Residues Lys119 and Ser172 each coordinate ATP. Gly199 lines the substrate pocket.

It belongs to the Thz kinase family. Mg(2+) serves as cofactor.

It carries out the reaction 5-(2-hydroxyethyl)-4-methylthiazole + ATP = 4-methyl-5-(2-phosphooxyethyl)-thiazole + ADP + H(+). Its pathway is cofactor biosynthesis; thiamine diphosphate biosynthesis; 4-methyl-5-(2-phosphoethyl)-thiazole from 5-(2-hydroxyethyl)-4-methylthiazole: step 1/1. In terms of biological role, catalyzes the phosphorylation of the hydroxyl group of 4-methyl-5-beta-hydroxyethylthiazole (THZ). The chain is Hydroxyethylthiazole kinase from Desulfovibrio desulfuricans (strain ATCC 27774 / DSM 6949 / MB).